A 91-amino-acid chain; its full sequence is Potassium channel toxin TstKMK (91 aa).

The first 25 residues, 1 to 25 (MVATNRCCVFALLFALLLVHSLTEA), serve as a signal peptide directing secretion. A propeptide spanning residues 26–42 (GKGKEILGKIKEKIIEA) is cleaved from the precursor. Positions 58-91 (EYACPAIDKFCEDHCAAKKAVGKCDDFKCKCIKL) constitute a BetaSPN-type CS-alpha/beta domain. Cystine bridges form between Cys61–Cys81, Cys68–Cys86, and Cys72–Cys88.

It belongs to the long chain scorpion toxin family. Class 2 subfamily. Expressed by the venom gland.

The protein resides in the secreted. Its function is as follows. The full peptide presents antibacterial and cytotoxic activities. The synthetic C-terminus (AA 33-76) inhibits voltage-gated potassium channels Kv1.1/KCNA1, Kv1.2/KCNA2, and Kv1.3/KCNA3. This chain is Potassium channel toxin TstKMK, found in Tityus stigmurus (Brazilian scorpion).